We begin with the raw amino-acid sequence, 452 residues long: UDP-N-acetylmuramoylalanine--D-glutamate ligase (452 aa).

115–121 (GTNGKTT) contributes to the ATP binding site.

It belongs to the MurCDEF family.

The protein localises to the cytoplasm. The catalysed reaction is UDP-N-acetyl-alpha-D-muramoyl-L-alanine + D-glutamate + ATP = UDP-N-acetyl-alpha-D-muramoyl-L-alanyl-D-glutamate + ADP + phosphate + H(+). The protein operates within cell wall biogenesis; peptidoglycan biosynthesis. Cell wall formation. Catalyzes the addition of glutamate to the nucleotide precursor UDP-N-acetylmuramoyl-L-alanine (UMA). This Elusimicrobium minutum (strain Pei191) protein is UDP-N-acetylmuramoylalanine--D-glutamate ligase.